Reading from the N-terminus, the 216-residue chain is Mite allergen Lep d 7 (216 aa).

Positions methionine 1–alanine 19 are cleaved as a signal peptide.

The protein belongs to the mite group 7 allergen family.

Its subcellular location is the secreted. The polypeptide is Mite allergen Lep d 7 (Lepidoglyphus destructor (Storage mite)).